A 229-amino-acid polypeptide reads, in one-letter code: Large ribosomal subunit protein uL1 (229 aa).

The protein belongs to the universal ribosomal protein uL1 family. In terms of assembly, part of the 50S ribosomal subunit.

In terms of biological role, binds directly to 23S rRNA. The L1 stalk is quite mobile in the ribosome, and is involved in E site tRNA release. Protein L1 is also a translational repressor protein, it controls the translation of the L11 operon by binding to its mRNA. The sequence is that of Large ribosomal subunit protein uL1 from Flavobacterium johnsoniae (strain ATCC 17061 / DSM 2064 / JCM 8514 / BCRC 14874 / CCUG 350202 / NBRC 14942 / NCIMB 11054 / UW101) (Cytophaga johnsonae).